The primary structure comprises 101 residues: Urease subunit beta (101 aa).

The protein belongs to the urease beta subunit family. In terms of assembly, heterotrimer of UreA (gamma), UreB (beta) and UreC (alpha) subunits. Three heterotrimers associate to form the active enzyme.

It localises to the cytoplasm. It carries out the reaction urea + 2 H2O + H(+) = hydrogencarbonate + 2 NH4(+). It participates in nitrogen metabolism; urea degradation; CO(2) and NH(3) from urea (urease route): step 1/1. This is Urease subunit beta from Psychromonas ingrahamii (strain DSM 17664 / CCUG 51855 / 37).